The primary structure comprises 116 residues: Type IV narrow pilus major component PilA5 (116 aa).

Residues 1–5 constitute a propeptide, leader sequence; the sequence is MRAKG. Phe-6 is modified (N-methylphenylalanine). Residues 6–26 form a helical membrane-spanning segment; that stretch reads FTLIELAIVIVIIGILVAIAV.

In terms of processing, glycosylated.

The protein localises to the cell inner membrane. The protein resides in the cell outer membrane. Its subcellular location is the periplasm. In terms of biological role, plays an essential role in forming the main structure of the narrow T4P pili that participates in twitching motility. The sequence is that of Type IV narrow pilus major component PilA5 (pilA5) from Thermus thermophilus (strain ATCC BAA-163 / DSM 7039 / HB27).